The following is a 200-amino-acid chain: Pyridoxamine 5'-phosphate oxidase homolog (200 aa).

The FMN site is built by Phe60, Lys68, and Asn125.

The protein belongs to the pyridoxamine 5'-phosphate oxidase family. It depends on FMN as a cofactor.

The protein localises to the cytoplasm. Its subcellular location is the nucleus. This Saccharomyces cerevisiae (strain ATCC 204508 / S288c) (Baker's yeast) protein is Pyridoxamine 5'-phosphate oxidase homolog.